The chain runs to 295 residues: F-box only protein 8 (295 aa).

One can recognise an F-box domain in the interval 35–80; the sequence is TWVARYIPQDLLIEILTRLPPKSVMRFKCVSKFWSSLLSSRYFCNR.

In Arabidopsis thaliana (Mouse-ear cress), this protein is F-box only protein 8 (FBX8).